Reading from the N-terminus, the 350-residue chain is Biotin synthase (350 aa).

Residues 1–13 (MVTQAATRPSNDA) are compositionally biased toward polar residues. A disordered region spans residues 1-20 (MVTQAATRPSNDAGQDGVTE). The region spanning 71–296 (PEVEVEGIIS…RTMLRFAGGR (226 aa)) is the Radical SAM core domain. 3 residues coordinate [4Fe-4S] cluster: Cys-86, Cys-90, and Cys-93. Residues Cys-129, Cys-162, Cys-221, and Arg-291 each coordinate [2Fe-2S] cluster.

Belongs to the radical SAM superfamily. Biotin synthase family. In terms of assembly, homodimer. [4Fe-4S] cluster is required as a cofactor. Requires [2Fe-2S] cluster as cofactor.

It catalyses the reaction (4R,5S)-dethiobiotin + (sulfur carrier)-SH + 2 reduced [2Fe-2S]-[ferredoxin] + 2 S-adenosyl-L-methionine = (sulfur carrier)-H + biotin + 2 5'-deoxyadenosine + 2 L-methionine + 2 oxidized [2Fe-2S]-[ferredoxin]. It participates in cofactor biosynthesis; biotin biosynthesis; biotin from 7,8-diaminononanoate: step 2/2. Its function is as follows. Catalyzes the conversion of dethiobiotin (DTB) to biotin by the insertion of a sulfur atom into dethiobiotin via a radical-based mechanism. The sequence is that of Biotin synthase from Mycobacterium ulcerans (strain Agy99).